A 297-amino-acid polypeptide reads, in one-letter code: UDP-N-acetylenolpyruvoylglucosamine reductase (297 aa).

The region spanning 22-195 (RAGGTARYYA…LAGRFRLQRG (174 aa)) is the FAD-binding PCMH-type domain. The active site involves arginine 169. Residue serine 223 is the Proton donor of the active site. Residue glutamate 293 is part of the active site.

It belongs to the MurB family. Requires FAD as cofactor.

It localises to the cytoplasm. It carries out the reaction UDP-N-acetyl-alpha-D-muramate + NADP(+) = UDP-N-acetyl-3-O-(1-carboxyvinyl)-alpha-D-glucosamine + NADPH + H(+). Its pathway is cell wall biogenesis; peptidoglycan biosynthesis. Cell wall formation. The protein is UDP-N-acetylenolpyruvoylglucosamine reductase of Chloroflexus aurantiacus (strain ATCC 29364 / DSM 637 / Y-400-fl).